The sequence spans 194 residues: ATP-dependent Clp protease proteolytic subunit (194 aa).

Ser-98 functions as the Nucleophile in the catalytic mechanism. His-123 is an active-site residue.

The protein belongs to the peptidase S14 family. In terms of assembly, fourteen ClpP subunits assemble into 2 heptameric rings which stack back to back to give a disk-like structure with a central cavity, resembling the structure of eukaryotic proteasomes.

Its subcellular location is the cytoplasm. The catalysed reaction is Hydrolysis of proteins to small peptides in the presence of ATP and magnesium. alpha-casein is the usual test substrate. In the absence of ATP, only oligopeptides shorter than five residues are hydrolyzed (such as succinyl-Leu-Tyr-|-NHMec, and Leu-Tyr-Leu-|-Tyr-Trp, in which cleavage of the -Tyr-|-Leu- and -Tyr-|-Trp bonds also occurs).. Its function is as follows. Cleaves peptides in various proteins in a process that requires ATP hydrolysis. Has a chymotrypsin-like activity. Plays a major role in the degradation of misfolded proteins. This chain is ATP-dependent Clp protease proteolytic subunit, found in Alkaliphilus metalliredigens (strain QYMF).